The primary structure comprises 190 residues: Adenine phosphoribosyltransferase (190 aa).

It belongs to the purine/pyrimidine phosphoribosyltransferase family. Homodimer.

The protein resides in the cytoplasm. It catalyses the reaction AMP + diphosphate = 5-phospho-alpha-D-ribose 1-diphosphate + adenine. It functions in the pathway purine metabolism; AMP biosynthesis via salvage pathway; AMP from adenine: step 1/1. Catalyzes a salvage reaction resulting in the formation of AMP, that is energically less costly than de novo synthesis. The sequence is that of Adenine phosphoribosyltransferase from Treponema denticola (strain ATCC 35405 / DSM 14222 / CIP 103919 / JCM 8153 / KCTC 15104).